Reading from the N-terminus, the 436-residue chain is Elongation factor 1-alpha (436 aa).

In terms of domain architecture, tr-type G spans 8–232 (KPHLNMIVTG…DDFKMAEKPV (225 aa)). The tract at residues 17-24 (GHIDNGKS) is G1. 17-24 (GHIDNGKS) is a binding site for GTP. S24 is a Mg(2+) binding site. Positions 74-78 (GITID) are G2. Residues 95–98 (DAPG) are G3. GTP is bound by residues 95 to 99 (DAPGH) and 157 to 160 (NKMD). Residues 157–160 (NKMD) are G4. Residues 196–198 (SGW) are G5.

Belongs to the TRAFAC class translation factor GTPase superfamily. Classic translation factor GTPase family. EF-Tu/EF-1A subfamily.

The protein resides in the cytoplasm. It catalyses the reaction GTP + H2O = GDP + phosphate + H(+). Functionally, GTP hydrolase that promotes the GTP-dependent binding of aminoacyl-tRNA to the A-site of ribosomes during protein biosynthesis. The protein is Elongation factor 1-alpha of Cenarchaeum symbiosum (strain A).